The primary structure comprises 459 residues: Putrescine aminotransferase (459 aa).

Pyridoxal 5'-phosphate is bound by residues 150–151 and glutamine 274; that span reads GT. Position 300 is an N6-(pyridoxal phosphate)lysine (lysine 300). Threonine 332 is a pyridoxal 5'-phosphate binding site.

The protein belongs to the class-III pyridoxal-phosphate-dependent aminotransferase family. Putrescine aminotransferase subfamily. Pyridoxal 5'-phosphate serves as cofactor.

It carries out the reaction an alkane-alpha,omega-diamine + 2-oxoglutarate = an omega-aminoaldehyde + L-glutamate. It catalyses the reaction putrescine + 2-oxoglutarate = 1-pyrroline + L-glutamate + H2O. The catalysed reaction is cadaverine + 2-oxoglutarate = 5-aminopentanal + L-glutamate. It participates in amine and polyamine degradation; putrescine degradation; 4-aminobutanal from putrescine (transaminase route): step 1/1. Catalyzes the aminotransferase reaction from putrescine to 2-oxoglutarate, leading to glutamate and 4-aminobutanal, which spontaneously cyclizes to form 1-pyrroline. This is the first step in one of two pathways for putrescine degradation, where putrescine is converted into 4-aminobutanoate (gamma-aminobutyrate or GABA) via 4-aminobutanal. Also functions as a cadaverine transaminase in a a L-lysine degradation pathway to succinate that proceeds via cadaverine, glutarate and L-2-hydroxyglutarate. The protein is Putrescine aminotransferase of Klebsiella pneumoniae subsp. pneumoniae (strain ATCC 700721 / MGH 78578).